Consider the following 330-residue polypeptide: Autoinducer 2 import system permease protein LsrD (330 aa).

Topologically, residues 1-4 are cytoplasmic; sequence MRIR. Residues 5 to 25 traverse the membrane as a helical segment; the sequence is YGWELALAALLVIEIVSFGAI. At 26 to 42 the chain is on the periplasmic side; it reads NPRMLDLNMLLFSTSDF. Residues 43–63 traverse the membrane as a helical segment; sequence ICIGIVALPLTMVIVSGGIDI. Over 64-67 the chain is Cytoplasmic; that stretch reads SFGS. The next 2 helical transmembrane spans lie at 68–88 and 89–109; these read TIGL…PMPL and AILL…GLII. The Cytoplasmic segment spans residues 110–115; the sequence is YTKVNP. Residues 116–136 form a helical membrane-spanning segment; sequence LVITLGTLYLFAGSALLLSGM. At 137 to 159 the chain is on the periplasmic side; that stretch reads AGATGYEGIGGFPMAFTDFANLD. A helical transmembrane segment spans residues 160–180; sequence VLGLPVPLIIFLICLLVFWLW. Residues 181–209 lie on the Cytoplasmic side of the membrane; sequence LHKTHAGRNVFLIGQSPRVALYSAIPVNR. Residues 210–230 traverse the membrane as a helical segment; it reads TLCALYAMTGLASAVAAVLLV. Residues 231-237 lie on the Periplasmic side of the membrane; sequence SYFGSAR. Helical transmembrane passes span 238-258 and 259-279; these read SDLG…GGAN and IYGG…VGYL. Residues 280–285 are Periplasmic-facing; the sequence is QQGLQM. The chain crosses the membrane as a helical span at residues 286–306; that stretch reads AGVPNQVSSALSGALLIVVVV. The Cytoplasmic portion of the chain corresponds to 307–330; the sequence is GRSVSLHRQQIKEWLARRANNPLP.

Belongs to the binding-protein-dependent transport system permease family. AraH/RbsC subfamily. The complex is composed of two ATP-binding proteins (LsrA), two transmembrane proteins (LsrC and LsrD) and a solute-binding protein (LsrB).

The protein localises to the cell inner membrane. Its function is as follows. Part of the ABC transporter complex LsrABCD involved in autoinducer 2 (AI-2) import. Probably responsible for the translocation of the substrate across the membrane. The sequence is that of Autoinducer 2 import system permease protein LsrD (lsrD) from Escherichia coli O157:H7.